Reading from the N-terminus, the 349-residue chain is Anthranilate phosphoribosyltransferase (349 aa).

5-phospho-alpha-D-ribose 1-diphosphate is bound by residues Gly-82, 85-86 (GD), 92-95 (NVST), 110-118 (KHGNRAVSG), and Ser-122. Gly-82 contacts anthranilate. Ser-94 contacts Mg(2+). Asn-113 serves as a coordination point for anthranilate. Arg-168 is an anthranilate binding site. Mg(2+)-binding residues include Asp-227 and Glu-228.

The protein belongs to the anthranilate phosphoribosyltransferase family. Homodimer. Mg(2+) serves as cofactor.

It carries out the reaction N-(5-phospho-beta-D-ribosyl)anthranilate + diphosphate = 5-phospho-alpha-D-ribose 1-diphosphate + anthranilate. It functions in the pathway amino-acid biosynthesis; L-tryptophan biosynthesis; L-tryptophan from chorismate: step 2/5. Its function is as follows. Catalyzes the transfer of the phosphoribosyl group of 5-phosphorylribose-1-pyrophosphate (PRPP) to anthranilate to yield N-(5'-phosphoribosyl)-anthranilate (PRA). This Pseudomonas savastanoi pv. phaseolicola (strain 1448A / Race 6) (Pseudomonas syringae pv. phaseolicola (strain 1448A / Race 6)) protein is Anthranilate phosphoribosyltransferase.